The following is a 685-amino-acid chain: MSRKREMPDGGAKSVLSDLRFGRFVGRIRRSRHPALLLLALFVAACWLTWVNFSVALPRSQWQQAIWSPDIDIIEQMIFHYSQLPRLAISLLVGAGLGLVGVLFQQVLRNPLAEPTTLGVATGAQLGITVTTLWAIPGALTTQFAALTGACIVGALVFGVAWGKRLSPVTLILAGLVVSLYCGAINQLLVIFHHDQLQSMFLWSTGTLTQTDWSGVQRLWPQLLGGVMLTLLLLRPMTLMGLDDGVARNLGLALSLARLAALSLAIVLSALLVNAVGIIGFIGLFAPLLAKMLGARRLLARLMLAPLIGALILWLSDQIILWLTRVWMEVSTGSVTALIGAPLLLWLLPRLKSMSAPDMNASDRVAAERRHVLAFAVAGGALLLLATWVALSFGRDAHGWTWASGTLLEELMPWRWPRILAALMAGVMLAVAGCIIQRLTGNPMASPEVLGISSGAAFGVVLMLFLVPGNAFGWLLPAGSLGAAATLLIIMIAAGRGGFSPQRMLLAGMALSTAFTMLLMMLQASGDPRMAEVLTWLSGSTYNATGGQVTRTAIVMVILLAIVPLCRRWLTILPLGGDAARAVGMALTPSRIALLALAACLTATATMTIGPLSFVGLMAPHIARMLGFRRTMPHMVISALAGGVLLVFADWCGRMALFPYQIPAGLLSSFIGAPYFIYLLRKQSR.

The next 18 helical transmembrane spans lie at 35-55 (ALLL…NFSV), 87-107 (LAIS…FQQV), 120-140 (VATG…PGAL), 143-163 (QFAA…VAWG), 172-192 (ILAG…LVIF), 222-242 (QLLG…LMGL), 265-285 (AIVL…IGLF), 302-322 (LMLA…IILW), 328-348 (MEVS…LWLL), 373-393 (LAFA…ALSF), 416-436 (WPRI…GCII), 456-476 (AAFG…GWLL), 479-499 (GSLG…RGGF), 504-524 (MLLA…MLQA), 553-573 (AIVM…LTIL), 592-612 (IALL…IGPL), 632-652 (MPHM…ADWC), and 660-680 (YQIP…IYLL).

It belongs to the binding-protein-dependent transport system permease family. FecCD subfamily. In terms of assembly, the complex is composed of two ATP-binding proteins (FhuC), a transmembrane protein (FhuB) and a solute-binding protein (FhuD).

It localises to the cell inner membrane. Part of the ABC transporter complex FhuCDB involved in iron(3+)-hydroxamate import. Responsible for the translocation of the substrate across the membrane. Involved in ferrioxamine-mediated iron(III) utilization. The polypeptide is Iron(3+)-hydroxamate import system permease protein FhuB (fhuB) (Salmonella typhimurium (strain LT2 / SGSC1412 / ATCC 700720)).